A 635-amino-acid chain; its full sequence is Threonine--tRNA ligase (635 aa).

The region spanning 1-61 is the TGS domain; that stretch reads MIKITLKDGK…HKDSSLEILT (61 aa). The interval 242 to 532 is catalytic; that stretch reads DHRKLGKELD…LIEQYAGAFP (291 aa). 3 residues coordinate Zn(2+): Cys333, His384, and His509.

It belongs to the class-II aminoacyl-tRNA synthetase family. Homodimer. The cofactor is Zn(2+).

It is found in the cytoplasm. The enzyme catalyses tRNA(Thr) + L-threonine + ATP = L-threonyl-tRNA(Thr) + AMP + diphosphate + H(+). In terms of biological role, catalyzes the attachment of threonine to tRNA(Thr) in a two-step reaction: L-threonine is first activated by ATP to form Thr-AMP and then transferred to the acceptor end of tRNA(Thr). Also edits incorrectly charged L-seryl-tRNA(Thr). The protein is Threonine--tRNA ligase of Clostridium botulinum (strain ATCC 19397 / Type A).